Here is a 382-residue protein sequence, read N- to C-terminus: Lipid-A-disaccharide synthase (382 aa).

Belongs to the LpxB family.

It carries out the reaction 2-N,3-O-bis[(3R)-3-hydroxytetradecanoyl]-alpha-D-glucosaminyl 1-phosphate + UDP-2-N,3-O-bis[(3R)-3-hydroxytetradecanoyl]-alpha-D-glucosamine = lipid A disaccharide (E. coli) + UDP + H(+). The enzyme catalyses a lipid X + a UDP-2-N,3-O-bis[(3R)-3-hydroxyacyl]-alpha-D-glucosamine = a lipid A disaccharide + UDP + H(+). The protein operates within glycolipid biosynthesis; lipid IV(A) biosynthesis; lipid IV(A) from (3R)-3-hydroxytetradecanoyl-[acyl-carrier-protein] and UDP-N-acetyl-alpha-D-glucosamine: step 5/6. Its function is as follows. Condensation of UDP-2,3-diacylglucosamine and 2,3-diacylglucosamine-1-phosphate to form lipid A disaccharide, a precursor of lipid A, a phosphorylated glycolipid that anchors the lipopolysaccharide to the outer membrane of the cell. This Escherichia fergusonii (strain ATCC 35469 / DSM 13698 / CCUG 18766 / IAM 14443 / JCM 21226 / LMG 7866 / NBRC 102419 / NCTC 12128 / CDC 0568-73) protein is Lipid-A-disaccharide synthase.